A 349-amino-acid polypeptide reads, in one-letter code: Phosphoribosylformylglycinamidine cyclo-ligase (349 aa).

This sequence belongs to the AIR synthase family.

The protein resides in the cytoplasm. The enzyme catalyses 2-formamido-N(1)-(5-O-phospho-beta-D-ribosyl)acetamidine + ATP = 5-amino-1-(5-phospho-beta-D-ribosyl)imidazole + ADP + phosphate + H(+). It participates in purine metabolism; IMP biosynthesis via de novo pathway; 5-amino-1-(5-phospho-D-ribosyl)imidazole from N(2)-formyl-N(1)-(5-phospho-D-ribosyl)glycinamide: step 2/2. The chain is Phosphoribosylformylglycinamidine cyclo-ligase from Lawsonia intracellularis (strain PHE/MN1-00).